The chain runs to 563 residues: Germacrene-A synthase (563 aa).

Residues Asp-316, Asp-320, Asp-461, and Glu-469 each contribute to the Mg(2+) site. The DDXXD motif motif lies at 316-320; sequence DDIYD.

This sequence belongs to the terpene synthase family. Tpsa subfamily. Requires Mg(2+) as cofactor. As to expression, expressed in young leaves. Detected in trichomes and cones.

The catalysed reaction is (2E,6E)-farnesyl diphosphate = (+)-(R)-germacrene A + diphosphate. It participates in secondary metabolite biosynthesis; terpenoid biosynthesis. Functionally, sesquiterpene synthase that catalyzes the formation of germacrene A. Can use farnesyl diphosphate as substrate, but not geranyl diphosphate or geranylgeranyl diphosphate. Beta-elemene, the initially measured product in the assay, is derived nonenzymatically from germacrene A. The chain is Germacrene-A synthase from Humulus lupulus (European hop).